A 1396-amino-acid chain; its full sequence is Helicase ARIP4 (1396 aa).

A disordered region spans residues 1–103 (MSDASISGSE…LQKPANLRRN (103 aa)). The segment covering 11-49 (PELDPEDMEEEEEDDEDDDEEEEEEEDEEDNDGDDEDDK) has biased composition (acidic residues). Positions 75-84 (RSTTSGQSGQ) are enriched in polar residues. Residues 290 to 510 (RFSGSSGFGC…WCMVDFVRPD (221 aa)) form the Helicase ATP-binding domain. 303–310 (HSMGLGKT) is an ATP binding site. The DEAH box signature appears at 461–464 (DEGH). Residues 549 to 553 (LHSLL) carry the LXXLL motif 1 motif. The Helicase C-terminal domain maps to 717–891 (KMVLLFHLIE…RVVDDLNPEV (175 aa)). 2 disordered regions span residues 1117–1168 (SGKQ…PDSP) and 1194–1250 (NLGL…STMN). Composition is skewed to polar residues over residues 1128–1148 (QATS…RHST) and 1218–1238 (DQSS…SYPN). Residues 1273–1277 (LPSLL) carry the LXXLL motif 2 motif. A disordered region spans residues 1340–1396 (GLPTNNPASTFPGYLSSHSNYQASPGTSSRPLPSGETELGSCEEDGRDDDVVEVTGE). The segment covering 1355 to 1370 (SSHSNYQASPGTSSRP) has biased composition (polar residues). Acidic residues predominate over residues 1380–1396 (SCEEDGRDDDVVEVTGE).

This sequence belongs to the SNF2/RAD54 helicase family.

Its subcellular location is the nucleus. The enzyme catalyses ATP + H2O = ADP + phosphate + H(+). Functionally, DNA helicase that modulates androgen receptor (AR)-dependent transactivation in a promoter-dependent manner. This is Helicase ARIP4 (rad54l2) from Xenopus tropicalis (Western clawed frog).